A 723-amino-acid chain; its full sequence is Catalase-peroxidase (723 aa).

The segment at residues 96-225 is a cross-link (tryptophyl-tyrosyl-methioninium (Trp-Tyr) (with M-251)); the sequence is WHAAGSYRVA…LAAVMMGLIY (130 aa). Histidine 97 functions as the Proton acceptor in the catalytic mechanism. Residues 225 to 251 constitute a cross-link (tryptophyl-tyrosyl-methioninium (Tyr-Met) (with W-96)); sequence YVNPEGVDGNPDPLKTAEDVRVTFARM. Residue histidine 266 coordinates heme b.

The protein belongs to the peroxidase family. Peroxidase/catalase subfamily. Homodimer or homotetramer. Requires heme b as cofactor. Post-translationally, formation of the three residue Trp-Tyr-Met cross-link is important for the catalase, but not the peroxidase activity of the enzyme.

The catalysed reaction is H2O2 + AH2 = A + 2 H2O. The enzyme catalyses 2 H2O2 = O2 + 2 H2O. Its function is as follows. Bifunctional enzyme with both catalase and broad-spectrum peroxidase activity. The sequence is that of Catalase-peroxidase from Alkalilimnicola ehrlichii (strain ATCC BAA-1101 / DSM 17681 / MLHE-1).